The primary structure comprises 383 residues: Dual-specificity RNA methyltransferase RlmN (383 aa).

E95 serves as the catalytic Proton acceptor. Positions 101-349 (EETRGTLCVS…TTVRKTRGDD (249 aa)) constitute a Radical SAM core domain. A disulfide bridge connects residues C108 and C354. Residues C115, C119, and C122 each coordinate [4Fe-4S] cluster. Residues 180 to 181 (GE), S212, 234 to 236 (SLH), and N311 contribute to the S-adenosyl-L-methionine site. C354 serves as the catalytic S-methylcysteine intermediate.

This sequence belongs to the radical SAM superfamily. RlmN family. It depends on [4Fe-4S] cluster as a cofactor.

The protein resides in the cytoplasm. The enzyme catalyses adenosine(2503) in 23S rRNA + 2 reduced [2Fe-2S]-[ferredoxin] + 2 S-adenosyl-L-methionine = 2-methyladenosine(2503) in 23S rRNA + 5'-deoxyadenosine + L-methionine + 2 oxidized [2Fe-2S]-[ferredoxin] + S-adenosyl-L-homocysteine. It catalyses the reaction adenosine(37) in tRNA + 2 reduced [2Fe-2S]-[ferredoxin] + 2 S-adenosyl-L-methionine = 2-methyladenosine(37) in tRNA + 5'-deoxyadenosine + L-methionine + 2 oxidized [2Fe-2S]-[ferredoxin] + S-adenosyl-L-homocysteine. Its function is as follows. Specifically methylates position 2 of adenine 2503 in 23S rRNA and position 2 of adenine 37 in tRNAs. m2A2503 modification seems to play a crucial role in the proofreading step occurring at the peptidyl transferase center and thus would serve to optimize ribosomal fidelity. This chain is Dual-specificity RNA methyltransferase RlmN, found in Paraburkholderia xenovorans (strain LB400).